The following is a 519-amino-acid chain: NADH-quinone oxidoreductase subunit N (519 aa).

13 helical membrane passes run 14–34 (LLPA…EVFL), 44–64 (AVLT…TMFE), 82–102 (FLTF…VSFL), 117–137 (LFAS…TLFV), 167–187 (FILG…LYGA), 209–229 (GLVY…VAAV), 249–269 (LMSV…FFMV), 278–298 (LLGL…LLAI), 307–327 (LAYS…ALFV), 359–379 (ILYY…IVSV), 407–427 (WAFA…TIGF), 431–451 (LLIF…VGVL), and 487–507 (LALV…GPIM).

This sequence belongs to the complex I subunit 2 family. NDH-1 is composed of 14 different subunits. Subunits NuoA, H, J, K, L, M, N constitute the membrane sector of the complex.

The protein resides in the cell inner membrane. It carries out the reaction a quinone + NADH + 5 H(+)(in) = a quinol + NAD(+) + 4 H(+)(out). NDH-1 shuttles electrons from NADH, via FMN and iron-sulfur (Fe-S) centers, to quinones in the respiratory chain. The immediate electron acceptor for the enzyme in this species is believed to be ubiquinone. Couples the redox reaction to proton translocation (for every two electrons transferred, four hydrogen ions are translocated across the cytoplasmic membrane), and thus conserves the redox energy in a proton gradient. The chain is NADH-quinone oxidoreductase subunit N from Myxococcus xanthus (strain DK1622).